The primary structure comprises 405 residues: Phosphoglycerate kinase (405 aa).

Substrate is bound by residues 21 to 23 (DFN), arginine 36, 59 to 62 (HLGR), arginine 119, and arginine 161. ATP-binding positions include lysine 212, glycine 301, glutamate 332, and 361–364 (GGDS).

It belongs to the phosphoglycerate kinase family. As to quaternary structure, monomer.

The protein localises to the cytoplasm. The catalysed reaction is (2R)-3-phosphoglycerate + ATP = (2R)-3-phospho-glyceroyl phosphate + ADP. The protein operates within carbohydrate degradation; glycolysis; pyruvate from D-glyceraldehyde 3-phosphate: step 2/5. In Leuconostoc mesenteroides subsp. mesenteroides (strain ATCC 8293 / DSM 20343 / BCRC 11652 / CCM 1803 / JCM 6124 / NCDO 523 / NBRC 100496 / NCIMB 8023 / NCTC 12954 / NRRL B-1118 / 37Y), this protein is Phosphoglycerate kinase.